The primary structure comprises 412 residues: 2,3-bisphosphoglycerate-independent phosphoglycerate mutase (412 aa).

Belongs to the BPG-independent phosphoglycerate mutase family. A-PGAM subfamily.

The catalysed reaction is (2R)-2-phosphoglycerate = (2R)-3-phosphoglycerate. Its pathway is carbohydrate degradation; glycolysis; pyruvate from D-glyceraldehyde 3-phosphate: step 3/5. Catalyzes the interconversion of 2-phosphoglycerate and 3-phosphoglycerate. The polypeptide is 2,3-bisphosphoglycerate-independent phosphoglycerate mutase (apgM) (Pyrococcus horikoshii (strain ATCC 700860 / DSM 12428 / JCM 9974 / NBRC 100139 / OT-3)).